The sequence spans 696 residues: MKFAEHLSAHITPEWRKQYIQYEAFKDMLYSAQDQAPSVEVTDEDTVKRYFAKFEEKFFQTCEKELAKINTFYSEKLAEAQRRFATLQNELQSSLDVQKESSGVTTLRQRRKPVFHLSHEERVQHRNIKDLKLAFSEFYLSLILLQNYQNLNFTGFRKILKKHDKILETSRGADWRVIHVEVAPFYTCKKINQLISETEAVVTNELEDGDRQKAMKRLRVPPLGAAQPAPAWTTFRVGLFCGIFIVLNITLVFAAVFKLETDRTVWPLIRIYRGGFLLIEFLFLLGINTYGWRQAGVNHVLIFELNPRNNLSHQHLFEIAGFLGILWCLSLLACFFAPISVIPIYVYPLALYGLMVFFLINPTKTFYYKSRFWLLKLLFRVFTAPFHKVGFADFWLADQLNSLSVILMDLEYMICFYSFELKWDESKGLLPNDPQEPEFCHKYSYGVRAIVQCIPAWLRFIQCLRRYRDTRRAFPHLVNAGKYSTTFFTVTFAALYSTHKEQNHSDTVVFFYLWVFFCIISSCYTLIWDLKMDWGLFDKNAGENTFLREEIVYPQKAYYYCAIIEDVILRFAWTIQISITATTFKPHVGDIIATVFAPLEVFRRFVWNFFRLENEHLNNCGEFRAVRDISVAPLNADDQTLLEQMMDQEDGVRNRQKNRSWKYNQSISLRRPRLASQSKARDTKVLIEDTDDEANT.

Topologically, residues 1 to 228 (MKFAEHLSAH…RVPPLGAAQP (228 aa)) are cytoplasmic. One can recognise an SPX domain in the interval 2–224 (KFAEHLSAHI…MKRLRVPPLG (223 aa)). An important for inositol polyphosphate binding region spans residues 158–165 (KILKKHDK). Residues 229–259 (APAWTTFRVGLFCGIFIVLNITLVFAAVFKL) traverse the membrane as a helical segment. At 260 to 264 (ETDRT) the chain is on the extracellular side. Residues 265–296 (VWPLIRIYRGGFLLIEFLFLLGINTYGWRQAG) traverse the membrane as a helical segment. Residues 297 to 309 (VNHVLIFELNPRN) are Cytoplasmic-facing. The chain crosses the membrane as a helical span at residues 310-337 (NLSHQHLFEIAGFLGILWCLSLLACFFA). At 338-343 (PISVIP) the chain is on the extracellular side. The helical transmembrane segment at 344-365 (IYVYPLALYGLMVFFLINPTKT) threads the bilayer. An intramembrane region (helical) is located at residues 366–383 (FYYKSRFWLLKLLFRVFT). Residues 384 to 388 (APFHK) are Cytoplasmic-facing. A discontinuously helical membrane pass occupies residues 389–422 (VGFADFWLADQLNSLSVILMDLEYMICFYSFELK). Residues Asp-398 and Asn-401 each contribute to the phosphate site. Residues 423–429 (WDESKGL) lie on the Extracellular side of the membrane. The chain crosses the membrane as a discontinuously helical span at residues 430-471 (LPNDPQEPEFCHKYSYGVRAIVQCIPAWLRFIQCLRRYRDTR). Residues 439-643 (FCHKYSYGVR…LNADDQTLLE (205 aa)) form the EXS domain. Position 472 (Arg-472) is a topological domain, cytoplasmic. Residues 473-503 (AFPHLVNAGKYSTTFFTVTFAALYSTHKEQN) form a helical membrane-spanning segment. Residues Lys-482 and Tyr-483 each coordinate phosphate. Over 504-506 (HSD) the chain is Extracellular. The helical transmembrane segment at 507–534 (TVVFFYLWVFFCIISSCYTLIWDLKMDW) threads the bilayer. Topologically, residues 535 to 553 (GLFDKNAGENTFLREEIVY) are cytoplasmic. A discontinuously helical transmembrane segment spans residues 554–585 (PQKAYYYCAIIEDVILRFAWTIQISITATTFK). Arg-570 is a phosphate binding site. The Extracellular portion of the chain corresponds to 586 to 587 (PH). Residues 588–626 (VGDIIATVFAPLEVFRRFVWNFFRLENEHLNNCGEFRAV) form a helical membrane-spanning segment. Residues Arg-603 and Arg-604 each coordinate phosphate. Over 627–696 (RDISVAPLNA…IEDTDDEANT (70 aa)) the chain is Cytoplasmic. Phosphoserine is present on Ser-668. The disordered stretch occupies residues 672–696 (PRLASQSKARDTKVLIEDTDDEANT). Thr-690 bears the Phosphothreonine mark.

It belongs to the SYG1 (TC 2.A.94) family. In terms of assembly, homodimer.

The protein localises to the cell membrane. The catalysed reaction is phosphate(in) = phosphate(out). Functionally, inorganic ion transporter that mediates phosphate ion export across plasma membrane. Plays a major role in phosphate homeostasis, preventing intracellular phosphate accumulation and possible calcium phosphate precipitation, ultimately preserving calcium signaling. Binds inositol hexakisphosphate (Ins6P) and similar inositol polyphosphates, such as 5-diphospho-inositol pentakisphosphate (5-InsP7), which are important intracellular signaling molecules involved in regulation of phosphate flux. (Microbial infection) Receptor for xenotropic and polytropic murine leukemia (X- and P-MLV) retroviruses. In Mus terricolor (Earth-colored mouse), this protein is Solute carrier family 53 member 1 (Xpr1).